Consider the following 660-residue polypeptide: MFDYLENEEVVLDELKQMLRDRDPNDTRNQFKNNALHAYLFNEHCNNVEVVKLLLDSGTNPLHKNWRQFTPIEEYTNSRHVKVNKDIAMALLEATGYSNINDFNIFSYMKSKNVDVDLIKVLVEHGFDLSVKCENHRSVIENYVMTDDPVPEIIDLFIENGCSVLYEDDEYGYVYDDYQPRNCGTVLHLYIIAHLYSESDTRAYVRPEVVKCLINHGIKPSSIDKNYCTALQYYIKSSHIDIDIVKLLMKGIDNTAYSYIDDLTCCTRGIMADYLNSDYRYNKDVDLDLVKLFLENGKPYGIMCSIVPLWRNDKETISLILKTMNSDVLQHILIEYMTFGDIDIPLVECMLEYGAVVNKEAIHRYFRNINIDSYTMKYLLKKEGGDAVNHLDDGEIPIGHLCESNYGCYNFYTYTYKKGLCDMSYVCPILSTINICLPYLKDINMIDKRGETLLHKAVRYNKQSLVSLLLESGSDVNIRSNNGYTCITIAINESRNIELLKMLLCHKPTLDCVIDSLSEVSNIVDNAYAIKQCIKYTMIIDDCTSSKIPESISQRYNDYIDLCNQELNEMKKIMVGGNTMFSLIFTEHGAKIIHRYANNPELRAYYESKQNKIYVEAYDIISDAIVKHNKIHKTIIKSVDDNTYISNLPYTIKYKIFEQQ.

9 ANK repeats span residues 31-64 (FKNN…PLHK), 101-131 (NDFN…DLSV), 135-166 (NHRS…SVLY), 190-222 (YIIA…KPSS), 226-257 (NYCT…NTAY), 268-302 (RGIM…PYGI), 325-359 (NSDV…VVNK), 449-478 (RGET…DVNI), and 482-512 (NGYT…TLDC). The tract at residues 578-658 (NTMFSLIFTE…PYTIKYKIFE (81 aa)) is PRANC/F-box-like.

This sequence belongs to the orthopoxvirus OPG023 family. In terms of assembly, interacts (via N-terminus) with host RELA. Interacts (via PRANC/F-box-like domain) with the SKP1 component of the host SCF ubiquitin ligase complex.

Its function is as follows. Substrate-specific adapter of SKP1-containing E3 ubiquitin-protein ligases which mediate the ubiquitination and subsequent proteasomal degradation of host target proteins. Prevents activation and subsequent nuclear localization of NF-kappa-B in infected cells, by targeting NF-kappa-B RELA subunit to the SCF E3 ligase complex. The protein is Ankyrin repeat domain-containing protein OPG023 (OPG023) of Cynomys gunnisoni (Gunnison's prairie dog).